The following is a 548-amino-acid chain: Chaperonin GroEL (548 aa).

Residues 30–33, Lys-51, 87–91, Gly-415, and 479–481 contribute to the ATP site; these read TLGP, DGTTT, and NAV.

Belongs to the chaperonin (HSP60) family. In terms of assembly, forms a cylinder of 14 subunits composed of two heptameric rings stacked back-to-back. Interacts with the co-chaperonin GroES.

It is found in the cytoplasm. It catalyses the reaction ATP + H2O + a folded polypeptide = ADP + phosphate + an unfolded polypeptide.. In terms of biological role, together with its co-chaperonin GroES, plays an essential role in assisting protein folding. The GroEL-GroES system forms a nano-cage that allows encapsulation of the non-native substrate proteins and provides a physical environment optimized to promote and accelerate protein folding. The sequence is that of Chaperonin GroEL from Stenotrophomonas maltophilia (Pseudomonas maltophilia).